The sequence spans 1753 residues: Negative regulator of sporulation PMD1 (1753 aa).

Kelch repeat units lie at residues 143–198 and 206–253; these read NIYI…VLNE and KLII…KILV. At Thr298 the chain carries Phosphothreonine. The segment covering 651-664 has biased composition (polar residues); that stretch reads TTKFGNSSQSSNGS. 2 disordered regions span residues 651 to 753 and 771 to 807; these read TTKF…TTCS and LGLSEQSGRSTRASSVSPPPVYKKSTNDGNDSNCTLS. A compositionally biased stretch (low complexity) spans 670–683; that stretch reads SKNGNSKSNSNTSL. 4 stretches are compositionally biased toward polar residues: residues 690–699, 740–753, 774–783, and 797–807; these read DFTSSTSSPK, TGTSNKRPISTTCS, SEQSGRSTRA, and NDGNDSNCTLS. The residue at position 838 (Ser838) is a Phosphoserine. 3 disordered regions span residues 875 to 915, 938 to 957, and 962 to 988; these read IASP…LGSS, PLEPLPPVPKAPSRRSSSLA, and FGRDSPVASRRSSHSTRKSSSSDARRI. Residues 880–900 show a composition bias toward low complexity; the sequence is QSRQTSFASTASTASVVSSTS. The span at 938–947 shows a compositional bias: pro residues; the sequence is PLEPLPPVPK. The span at 979–988 shows a compositional bias: low complexity; sequence KSSSSDARRI. Ser1289, Ser1307, and Ser1356 each carry phosphoserine. Disordered regions lie at residues 1312–1467, 1604–1686, and 1706–1753; these read SPAT…DLDS, PIFA…NKRF, and SAVN…GKRR. A compositionally biased stretch (polar residues) spans 1344–1379; it reads VSRQQNFPRRSSSFTETVPTEPTRYNYQNLDSSKSN. The span at 1399–1430 shows a compositional bias: basic and acidic residues; that stretch reads NFDKYKVETLQKRNSNDGKDLDRTNDPLKNRG. Residues 1653-1677 are compositionally biased toward polar residues; the sequence is IKFSQAPSTQISPRTSVTDFTASQQ. Position 1664 is a phosphoserine (Ser1664). The segment covering 1711–1723 has biased composition (basic and acidic residues); sequence GRKESEGHCEDRS.

The protein resides in the cytoplasm. Negatively regulates early sporulation-specific genes. Seems to exert its function by positively regulating the Ras/cAMP pathway. Required for growth under alkaline conditions. Acts synergetically with MDS3. This chain is Negative regulator of sporulation PMD1 (PMD1), found in Saccharomyces cerevisiae (strain ATCC 204508 / S288c) (Baker's yeast).